A 170-amino-acid chain; its full sequence is MELKLTDLAFTALPNGKVLPPGILSSSSNCKKCGLRCDNGLPYCFNCQFKCQVCGSYDNLLIKNNSTETLCKYVNPKDHVYKFATNRSAYKMKYKLCSKCKDYVLCAMCLTFNQNAFAKEIWSYEEPLFVMEICKKCMHKHTCDECNTPSSSNIKIFLDGYIYCNKCDEE.

The chain is Cysteine-rich uncharacterized protein 241L from Acheta domesticus (House cricket).